We begin with the raw amino-acid sequence, 858 residues long: DNA mismatch repair protein MutS (858 aa).

613–620 (GPNMAGKS) contributes to the ATP binding site.

It belongs to the DNA mismatch repair MutS family.

In terms of biological role, this protein is involved in the repair of mismatches in DNA. It is possible that it carries out the mismatch recognition step. This protein has a weak ATPase activity. The protein is DNA mismatch repair protein MutS of Dehalococcoides mccartyi (strain ATCC BAA-2266 / KCTC 15142 / 195) (Dehalococcoides ethenogenes (strain 195)).